The following is a 321-amino-acid chain: tRNA dimethylallyltransferase (321 aa).

24-31 (GPTASGKS) contacts ATP. 26-31 (TASGKS) is a binding site for substrate. Interaction with substrate tRNA regions lie at residues 49-52 (DSMQ) and 172-176 (QRIVR).

This sequence belongs to the IPP transferase family. As to quaternary structure, monomer. Mg(2+) is required as a cofactor.

The catalysed reaction is adenosine(37) in tRNA + dimethylallyl diphosphate = N(6)-dimethylallyladenosine(37) in tRNA + diphosphate. Functionally, catalyzes the transfer of a dimethylallyl group onto the adenine at position 37 in tRNAs that read codons beginning with uridine, leading to the formation of N6-(dimethylallyl)adenosine (i(6)A). This is tRNA dimethylallyltransferase from Mesorhizobium japonicum (strain LMG 29417 / CECT 9101 / MAFF 303099) (Mesorhizobium loti (strain MAFF 303099)).